Consider the following 244-residue polypeptide: MNEIREAVVQTPEQATAVIRAEALAKTYAEGKMRTPVFDGLDLSVATGETVAIVGASGAGKSTLLHLLGGLDIPTAGEVYVAGERMSALSDAQRGKLRNQSLGFVYQFHHLLPEFTALENVMMPVLLSGKNVAVAKGQALQLLESVGLGHRIDHKPSELSGGERQRCAVARALVNKPGCVLGDEPTGNLDDKTAGTVFELMLELNRAQRTSLVLVTHDRGLARRLDRVLELHQGKLRELAPSAV.

The ABC transporter domain occupies isoleucine 19 to valine 244. Glycine 55 to serine 62 lines the ATP pocket.

It belongs to the ABC transporter superfamily. Lipoprotein translocase (TC 3.A.1.125) family. As to quaternary structure, the complex is composed of two ATP-binding proteins (LolD) and two transmembrane proteins (LolC and LolE).

The protein resides in the cell inner membrane. Its function is as follows. Part of the ABC transporter complex LolCDE involved in the translocation of mature outer membrane-directed lipoproteins, from the inner membrane to the periplasmic chaperone, LolA. Responsible for the formation of the LolA-lipoprotein complex in an ATP-dependent manner. In Xanthomonas oryzae pv. oryzae (strain MAFF 311018), this protein is Lipoprotein-releasing system ATP-binding protein LolD.